Reading from the N-terminus, the 421-residue chain is UDP-N-acetylglucosamine 1-carboxyvinyltransferase 2 (421 aa).

Position 22–23 (22–23) interacts with phosphoenolpyruvate; that stretch reads KN. Arginine 94 serves as a coordination point for UDP-N-acetyl-alpha-D-glucosamine. Residue cysteine 118 is the Proton donor of the active site. The residue at position 118 (cysteine 118) is a 2-(S-cysteinyl)pyruvic acid O-phosphothioketal. Positions 308 and 330 each coordinate UDP-N-acetyl-alpha-D-glucosamine.

This sequence belongs to the EPSP synthase family. MurA subfamily.

Its subcellular location is the cytoplasm. It catalyses the reaction phosphoenolpyruvate + UDP-N-acetyl-alpha-D-glucosamine = UDP-N-acetyl-3-O-(1-carboxyvinyl)-alpha-D-glucosamine + phosphate. It participates in cell wall biogenesis; peptidoglycan biosynthesis. In terms of biological role, cell wall formation. Adds enolpyruvyl to UDP-N-acetylglucosamine. The sequence is that of UDP-N-acetylglucosamine 1-carboxyvinyltransferase 2 from Lactococcus lactis subsp. lactis (strain IL1403) (Streptococcus lactis).